Here is a 355-residue protein sequence, read N- to C-terminus: Probable butyrate kinase (355 aa).

Belongs to the acetokinase family.

Its subcellular location is the cytoplasm. The catalysed reaction is butanoate + ATP = butanoyl phosphate + ADP. In Clostridium botulinum (strain Alaska E43 / Type E3), this protein is Probable butyrate kinase.